The following is a 342-amino-acid chain: Nuclear hormone receptor family member nhr-150 (342 aa).

Positions 1 to 71 form a DNA-binding region, nuclear receptor; sequence MCQVCGAAEA…AGMTSKKIQS (71 aa). An NR C4-type zinc finger spans residues 2 to 22; that stretch reads CQVCGAAEADLHFGGISCRAC. The segment at 39–54 adopts an NR C4-type; degenerate zinc-finger fold; the sequence is CTCKTRILDSHPCRSC. The NR LBD domain maps to 94–341; the sequence is SARIIPRSSL…GFMEIIRESK (248 aa).

It belongs to the nuclear hormone receptor family.

Its subcellular location is the nucleus. Orphan nuclear receptor. The chain is Nuclear hormone receptor family member nhr-150 (nhr-150) from Caenorhabditis elegans.